Reading from the N-terminus, the 352-residue chain is Outer membrane protein assembly factor BamC (352 aa).

A signal peptide spans 1–19; the sequence is MQYWIPKALAVSVLVSLSG. A lipid anchor (N-palmitoyl cysteine) is attached at C20. Residue C20 is the site of S-diacylglycerol cysteine attachment.

Belongs to the BamC family. As to quaternary structure, part of the Bam complex.

It is found in the cell outer membrane. Part of the outer membrane protein assembly complex, which is involved in assembly and insertion of beta-barrel proteins into the outer membrane. This is Outer membrane protein assembly factor BamC from Pseudoalteromonas sp. (strain SM9913).